The primary structure comprises 697 residues: MSMFNIVRKEFQFGQHQVVLETGRVARQANTVLITMGGVTVLVAVVAAPTAKAGQDFFPLTVNYQEKQYAAGRIPGGYGKREGRASEAETLISRLIDRPIRPLFPEGYYNEIQVTATVVSSDKTMEADIAAMLGTSAALAIAGTPFRGPIGAARVGLINGEYVLNPNFEQMAQSDLDLVVAGTESAVLMVESEAKELSEDQMLGAVLFGHDEMQIAIQAINEFAAAAGAKPSDWVAPAHNEELRAKLKEAFEAKISEAYTIAVKQDRYAALDALHAEAVAQFVPEEDVDGIADEVDYLFEDLKYRTVRDNILSGKPRIDGRDTKTVRALDVQVGVLERAHGSALFTRGETQALVTTTLGNTRDALMVDTLAGTKTDNFMLHYNFPAYSVGETGRESGPKRREIGHGRLARRGVQAVLPAADRFPYVIRIVSDITESNGSSSMASVCGASLSLMDAGVPLKAPVAGIAMGLVKEGERFAVLSDILGDEDHLGDMDFKVAGSANGITALQMDIKIEGITEEIMEVALNQAFAGRMHILNEMNKVISRARPEISMHAPTFEVITINPDKIRDVIGKGGATIRQITEETKAAIDIEDNGTVRVFGETKAAAKAAIAKIQAITAEVEPGKIYDGKVIRIVEFGAFVNIMPGTDGLLHISQISNERIANVTDVLKEGQEVKVQVQDVDNRGRIKLTMKDIEQA.

The Mg(2+) site is built by Asp-488 and Asp-494. A KH domain is found at 555-614 (PTFEVITINPDKIRDVIGKGGATIRQITEETKAAIDIEDNGTVRVFGETKAAAKAAIAKI). The 69-residue stretch at 624 to 692 (GKIYDGKVIR…NRGRIKLTMK (69 aa)) folds into the S1 motif domain.

It belongs to the polyribonucleotide nucleotidyltransferase family. In terms of assembly, component of the RNA degradosome, which is a multiprotein complex involved in RNA processing and mRNA degradation. The cofactor is Mg(2+).

Its subcellular location is the cytoplasm. The catalysed reaction is RNA(n+1) + phosphate = RNA(n) + a ribonucleoside 5'-diphosphate. In terms of biological role, involved in mRNA degradation. Catalyzes the phosphorolysis of single-stranded polyribonucleotides processively in the 3'- to 5'-direction. The chain is Polyribonucleotide nucleotidyltransferase from Acinetobacter baumannii (strain AB307-0294).